Reading from the N-terminus, the 85-residue chain is uncharacterized protein (85 aa).

This is an uncharacterized protein from Lactococcus phage mv4 (Lactococcus delbrueckii bacteriophage mv4).